Reading from the N-terminus, the 449-residue chain is MGKINFDYSKATEFFCQNEIDVMQPYVDVAHDMLHNKTGLGNTFLGWIDLPKNYDKEEFDRIKKSAEKIKSDSDVLLVIGIGGSYLGSRAAIDMVSHSFRNGLKKEQRKAPEVYFVGHNISSTYIMDLLDIIEGKDISVNVISKSGTTTEPALAFRIFKDYLEKKYGKEEARKRIYATTDASKGALRQLATEEGYETFVIPDDVGGRFSVLTAVGLLPIAAAGLDIDAMMKGANDAREAFQNPDLKSNDSYRYAVARTILHRKGKDVELLVNYEPQLHYVSEWWKQLYGESEGKENKGLFPASVDFSTDLHSMGQYIQDGKRLLFETVLNVENCKRNITISSEEVDLDGLNYLAGKTVDFVNHKAFEGTLLAHTDGKVPNLVINIPQLDEYNFGYLVYFFEKACGISGYLLGVNPFDQPGVEAYKKNMFALLGKPGYEKEKEELEKRLK.

Glu-290 serves as the catalytic Proton donor. Catalysis depends on residues His-311 and Lys-425.

Belongs to the GPI family.

The protein resides in the cytoplasm. It carries out the reaction alpha-D-glucose 6-phosphate = beta-D-fructose 6-phosphate. Its pathway is carbohydrate biosynthesis; gluconeogenesis. It functions in the pathway carbohydrate degradation; glycolysis; D-glyceraldehyde 3-phosphate and glycerone phosphate from D-glucose: step 2/4. In terms of biological role, catalyzes the reversible isomerization of glucose-6-phosphate to fructose-6-phosphate. In Clostridioides difficile (strain 630) (Peptoclostridium difficile), this protein is Glucose-6-phosphate isomerase.